Reading from the N-terminus, the 299-residue chain is Biphenyl-2,3-diol 1,2-dioxygenase (299 aa).

2 VOC domains span residues 6–121 and 146–267; these read ELGY…IFYG and GIGH…FGWG. 3 residues coordinate Fe cation: His-149, His-212, and Glu-263.

The protein belongs to the extradiol ring-cleavage dioxygenase family. Homooctamer. It depends on Fe(2+) as a cofactor.

It carries out the reaction biphenyl-2,3-diol + O2 = 2-hydroxy-6-oxo-6-phenylhexa-2,4-dienoate + H(+). Its pathway is xenobiotic degradation; biphenyl degradation; 2-hydroxy-2,4-pentadienoate and benzoate from biphenyl: step 3/4. This is Biphenyl-2,3-diol 1,2-dioxygenase (bphC) from Sphingomonas paucimobilis (Pseudomonas paucimobilis).